The primary structure comprises 312 residues: Dihydroorotate dehydrogenase B (NAD(+)), catalytic subunit (312 aa).

Residues Ser-21 and 45-46 (KA) contribute to the FMN site. Substrate is bound by residues Lys-45 and 69 to 73 (NAIGL). Residues Asn-99 and Asn-127 each coordinate FMN. Substrate is bound at residue Asn-127. Catalysis depends on Cys-130, which acts as the Nucleophile. The FMN site is built by Lys-165 and Ile-191. Residue 192-193 (NT) coordinates substrate. Residues Gly-217, 243-244 (GG), and 265-266 (GT) each bind FMN.

The protein belongs to the dihydroorotate dehydrogenase family. Type 1 subfamily. Heterotetramer of 2 PyrK and 2 PyrD type B subunits. It depends on FMN as a cofactor.

The protein resides in the cytoplasm. It carries out the reaction (S)-dihydroorotate + NAD(+) = orotate + NADH + H(+). Its pathway is pyrimidine metabolism; UMP biosynthesis via de novo pathway; orotate from (S)-dihydroorotate (NAD(+) route): step 1/1. Its function is as follows. Catalyzes the conversion of dihydroorotate to orotate with NAD(+) as electron acceptor. The protein is Dihydroorotate dehydrogenase B (NAD(+)), catalytic subunit (pyrD) of Anoxybacillus flavithermus (strain DSM 21510 / WK1).